The chain runs to 167 residues: NADH-ubiquinone oxidoreductase chain 6 (167 aa).

Helical transmembrane passes span 1–21 (MKMM…VAFA), 27–47 (VYGG…VVSL), 50–70 (VFLG…VFGY), 88–108 (VALS…LMSG), and 143–163 (WALV…LEVV).

This sequence belongs to the complex I subunit 6 family. Core subunit of respiratory chain NADH dehydrogenase (Complex I) which is composed of 45 different subunits.

It localises to the mitochondrion inner membrane. It catalyses the reaction a ubiquinone + NADH + 5 H(+)(in) = a ubiquinol + NAD(+) + 4 H(+)(out). In terms of biological role, core subunit of the mitochondrial membrane respiratory chain NADH dehydrogenase (Complex I) which catalyzes electron transfer from NADH through the respiratory chain, using ubiquinone as an electron acceptor. Essential for the catalytic activity and assembly of complex I. This chain is NADH-ubiquinone oxidoreductase chain 6 (MT-ND6), found in Osphranter robustus (Wallaroo).